Consider the following 901-residue polypeptide: HTH-type transcriptional regulator MalT (901 aa).

Residue 39 to 46 coordinates ATP; sequence SPAGYGKT. An HTH luxR-type domain is found at 829-894; it reads ELIRTSPLTQ…DAVQHAQQLL (66 aa). A DNA-binding region (H-T-H motif) is located at residues 853–872; the sequence is NEQIAGELDVAATTIKTHIR.

The protein belongs to the MalT family. In terms of assembly, monomer in solution. Oligomerizes to an active state in the presence of the positive effectors ATP and maltotriose.

Its activity is regulated as follows. Activated by ATP and maltotriose, which are both required for DNA binding. In terms of biological role, positively regulates the transcription of the maltose regulon whose gene products are responsible for uptake and catabolism of malto-oligosaccharides. Specifically binds to the promoter region of its target genes, recognizing a short DNA motif called the MalT box. This Klebsiella pneumoniae subsp. pneumoniae (strain ATCC 700721 / MGH 78578) protein is HTH-type transcriptional regulator MalT.